Here is a 163-residue protein sequence, read N- to C-terminus: Anaerobic nitrite reductase HB1 (163 aa).

In terms of domain architecture, Globin spans 8 to 157 (VFTEEQEALV…LVAAIKIEMK (150 aa)). The Homodimerization motif lies at 41-45 (EIAPS). S51, K65, H69, K99, T103, and H104 together coordinate heme b. A Homodimerization motif is present at residues 111 to 123 (DEHFEVTKFALLE).

The protein belongs to the plant globin family. As to quaternary structure, homodimer. The cofactor is heme b.

It is found in the cytoplasm. Its subcellular location is the nucleus. The catalysed reaction is Fe(III)-heme b-[protein] + nitric oxide + H2O = Fe(II)-heme b-[protein] + nitrite + 2 H(+). Functionally, phytoglobin that reduces nitrite to nitric oxide (NO) under anoxic conditions (e.g. during flooding or in waterlogged soil). May not function as an oxygen storage or transport protein. Has an unusually high affinity for O(2) through an hexacoordinate heme iron because of a very low dissociation constant. The protein is Anaerobic nitrite reductase HB1 of Gossypium hirsutum (Upland cotton).